A 303-amino-acid polypeptide reads, in one-letter code: Siderophore enterobactin esterase (303 aa).

This sequence belongs to the esterase D family. In terms of assembly, homodimer.

The catalysed reaction is enterobactin + 3 H2O = 3 N-(2,3-dihydroxybenzoyl)-L-serine + 2 H(+). In terms of biological role, displays specific enterobactin (ENB) esterase activity required for intracellular release of iron. Enterobactin is a xenosiderophore that is selectively produced by Gram-negative Enterobacteriaceae. The affinity for enterobactin is quite high, potentially due to the low natural abundance of this xenosiderophore in fungal habitats. Does not hydrolyze triacetylfusarinine C (TAFC). The chain is Siderophore enterobactin esterase from Emericella nidulans (strain FGSC A4 / ATCC 38163 / CBS 112.46 / NRRL 194 / M139) (Aspergillus nidulans).